The chain runs to 125 residues: uncharacterized protein (125 aa).

Residues 7 to 29 (NCMFLYVYTDVCVRLCASIFYIM) form a helical membrane-spanning segment.

It is found in the membrane. This is an uncharacterized protein from Saccharomyces cerevisiae (strain ATCC 204508 / S288c) (Baker's yeast).